The primary structure comprises 332 residues: Ribosomal RNA small subunit methyltransferase H (332 aa).

S-adenosyl-L-methionine-binding positions include 39-41 (GGY), Asp-56, Phe-83, Asp-100, and Gln-107.

Belongs to the methyltransferase superfamily. RsmH family.

The protein localises to the cytoplasm. The catalysed reaction is cytidine(1402) in 16S rRNA + S-adenosyl-L-methionine = N(4)-methylcytidine(1402) in 16S rRNA + S-adenosyl-L-homocysteine + H(+). Specifically methylates the N4 position of cytidine in position 1402 (C1402) of 16S rRNA. The chain is Ribosomal RNA small subunit methyltransferase H from Bartonella grahamii (strain as4aup).